Reading from the N-terminus, the 470-residue chain is Argininosuccinate lyase (470 aa).

Belongs to the lyase 1 family. Argininosuccinate lyase subfamily.

It localises to the cytoplasm. The catalysed reaction is 2-(N(omega)-L-arginino)succinate = fumarate + L-arginine. It functions in the pathway amino-acid biosynthesis; L-arginine biosynthesis; L-arginine from L-ornithine and carbamoyl phosphate: step 3/3. This is Argininosuccinate lyase from Ehrlichia chaffeensis (strain ATCC CRL-10679 / Arkansas).